The primary structure comprises 283 residues: Bifunctional protein FolD (283 aa).

Residues 166–168 (GQS), Ser191, and Ile232 each bind NADP(+).

The protein belongs to the tetrahydrofolate dehydrogenase/cyclohydrolase family. In terms of assembly, homodimer.

It catalyses the reaction (6R)-5,10-methylene-5,6,7,8-tetrahydrofolate + NADP(+) = (6R)-5,10-methenyltetrahydrofolate + NADPH. The catalysed reaction is (6R)-5,10-methenyltetrahydrofolate + H2O = (6R)-10-formyltetrahydrofolate + H(+). The protein operates within one-carbon metabolism; tetrahydrofolate interconversion. Its function is as follows. Catalyzes the oxidation of 5,10-methylenetetrahydrofolate to 5,10-methenyltetrahydrofolate and then the hydrolysis of 5,10-methenyltetrahydrofolate to 10-formyltetrahydrofolate. The protein is Bifunctional protein FolD of Laribacter hongkongensis (strain HLHK9).